The chain runs to 142 residues: Ribosomal RNA large subunit methyltransferase H (142 aa).

2 residues coordinate S-adenosyl-L-methionine: L55 and G87.

It belongs to the RNA methyltransferase RlmH family. Homodimer.

It is found in the cytoplasm. The catalysed reaction is pseudouridine(1915) in 23S rRNA + S-adenosyl-L-methionine = N(3)-methylpseudouridine(1915) in 23S rRNA + S-adenosyl-L-homocysteine + H(+). Its function is as follows. Specifically methylates the pseudouridine at position 1915 (m3Psi1915) in 23S rRNA. This is Ribosomal RNA large subunit methyltransferase H from Sphingopyxis alaskensis (strain DSM 13593 / LMG 18877 / RB2256) (Sphingomonas alaskensis).